Here is a 100-residue protein sequence, read N- to C-terminus: Glutamyl-tRNA(Gln) amidotransferase subunit C (100 aa).

Belongs to the GatC family. As to quaternary structure, heterotrimer of A, B and C subunits.

It catalyses the reaction L-glutamyl-tRNA(Gln) + L-glutamine + ATP + H2O = L-glutaminyl-tRNA(Gln) + L-glutamate + ADP + phosphate + H(+). The catalysed reaction is L-aspartyl-tRNA(Asn) + L-glutamine + ATP + H2O = L-asparaginyl-tRNA(Asn) + L-glutamate + ADP + phosphate + 2 H(+). Functionally, allows the formation of correctly charged Asn-tRNA(Asn) or Gln-tRNA(Gln) through the transamidation of misacylated Asp-tRNA(Asn) or Glu-tRNA(Gln) in organisms which lack either or both of asparaginyl-tRNA or glutaminyl-tRNA synthetases. The reaction takes place in the presence of glutamine and ATP through an activated phospho-Asp-tRNA(Asn) or phospho-Glu-tRNA(Gln). The protein is Glutamyl-tRNA(Gln) amidotransferase subunit C of Rickettsia conorii (strain ATCC VR-613 / Malish 7).